A 136-amino-acid chain; its full sequence is Probable acyltransferase SID5 (136 aa).

Its pathway is siderophore biosynthesis. Probable acyltransferase; part of the gene cluster that mediates the biosynthesis of hydroxamate-containing siderophores that play a critical role in virulence via intracellular iron acquisition during macrophage infection. The sequence is that of Probable acyltransferase SID5 from Ajellomyces capsulatus (Darling's disease fungus).